Here is a 337-residue protein sequence, read N- to C-terminus: CMRF35-like molecule 1 (337 aa).

Positions 1 to 19 (MHLSLLVPFLFWITGCCTA) are cleaved as a signal peptide. Positions 20–125 (EDPVTGPEEV…LDPMFKVTVN (106 aa)) constitute an Ig-like V-type domain. Residues 20-193 (EDPVTGPEEV…GVGDGFLDLS (174 aa)) are Extracellular-facing. Positions 39 to 45 (VQCRYTS) are plays an important role in murine norovirus (MNV) binding. 2 disulfides stabilise this stretch: cysteine 41-cysteine 109 and cysteine 55-cysteine 63. The helical transmembrane segment at 194–214 (VLLPVISAVLLLLLLVASLFA) threads the bilayer. The Cytoplasmic portion of the chain corresponds to 215–337 (WRMVRRQKKA…IRRPLPAAMP (123 aa)). Disordered stretches follow at residues 248–270 (QPRTSPGSSWKKGSSMSSSGKDH) and 318–337 (LEEETTEYSSIRRPLPAAMP). The span at 252 to 266 (SPGSSWKKGSSMSSS) shows a compositional bias: low complexity.

Belongs to the CD300 family. Interacts with PTPN6/SHP-1 in a tyrosine phosphorylation dependent manner. Interacts with IL4R. In terms of processing, phosphorylated on tyrosine. As to expression, expressed in myeloid cells. Present on the surface of macrophages (at protein level). Highly expressed by alveolar, splenic macrophages and bone marrow-derived dendritic cells. Expression is increased following aeroallergen challenge in macrophages, mast cells, and eosinophils.

It localises to the cell membrane. In terms of biological role, acts as an inhibitory receptor for myeloid cells and mast cells. Positively regulates the phagocytosis of apoptotic cells (efferocytosis) via phosphatidylserine (PS) recognition; recognizes and binds PS as a ligand which is expressed on the surface of apoptotic cells. Plays an important role in the maintenance of immune homeostasis, by promoting macrophage-mediated efferocytosis and by inhibiting dendritic cell-mediated efferocytosis. Negatively regulates Fc epsilon receptor-dependent mast cell activation and allergic responses via binding to ceramide which acts as a ligand. May act as a coreceptor for interleukin 4 (IL-4). Associates with and regulates IL-4 receptor alpha-mediated responses by augmenting IL-4- and IL-13-induced signaling. Negatively regulates the Toll-like receptor (TLR) signaling mediated by MYD88 and TRIF through activation of PTPN6/SHP-1 and PTPN11/SHP-2. Inhibits osteoclast formation. Induces macrophage cell death upon engagement. (Microbial infection) Acts as a functional receptor for murine norovirus (MNV). Mediates binding to the cell surface and is both necessary and sufficient for viral entry and replication. This interaction requires Mg(2+) and Ca(2+) and is enhanced by bile acids. Primary determinant of MNV species tropism and is sufficient to render cells permissive to infection by MNV. Can render nonmurine mammalian cells susceptible to MNV infection. The sequence is that of CMRF35-like molecule 1 (Cd300lf) from Mus musculus (Mouse).